The sequence spans 393 residues: L-rhamnonate dehydratase (393 aa).

The substrate site is built by His-22 and Arg-48. The Mg(2+) site is built by Asp-214, Glu-241, and Glu-269. The Proton acceptor role is filled by His-319. Glu-339 lines the substrate pocket.

Belongs to the mandelate racemase/muconate lactonizing enzyme family. RhamD subfamily. As to quaternary structure, homooctamer; tetramer of dimers. Requires Mg(2+) as cofactor.

It catalyses the reaction L-rhamnonate = 2-dehydro-3-deoxy-L-rhamnonate + H2O. In terms of biological role, catalyzes the dehydration of L-rhamnonate to 2-keto-3-deoxy-L-rhamnonate (KDR). The chain is L-rhamnonate dehydratase from Azorhizobium caulinodans (strain ATCC 43989 / DSM 5975 / JCM 20966 / LMG 6465 / NBRC 14845 / NCIMB 13405 / ORS 571).